A 227-amino-acid polypeptide reads, in one-letter code: Orotate phosphoribosyltransferase (227 aa).

Lysine 26 contacts 5-phospho-alpha-D-ribose 1-diphosphate. 34 to 35 contributes to the orotate binding site; that stretch reads FF. 5-phospho-alpha-D-ribose 1-diphosphate is bound by residues 72-73, arginine 98, lysine 99, lysine 102, histidine 104, and 123-131; these read YK and DDVVSAGLS. Residues serine 127 and arginine 155 each contribute to the orotate site.

Belongs to the purine/pyrimidine phosphoribosyltransferase family. PyrE subfamily. As to quaternary structure, homodimer. Mg(2+) is required as a cofactor.

It carries out the reaction orotidine 5'-phosphate + diphosphate = orotate + 5-phospho-alpha-D-ribose 1-diphosphate. It participates in pyrimidine metabolism; UMP biosynthesis via de novo pathway; UMP from orotate: step 1/2. Functionally, catalyzes the transfer of a ribosyl phosphate group from 5-phosphoribose 1-diphosphate to orotate, leading to the formation of orotidine monophosphate (OMP). This Nitrosomonas europaea (strain ATCC 19718 / CIP 103999 / KCTC 2705 / NBRC 14298) protein is Orotate phosphoribosyltransferase.